Reading from the N-terminus, the 378-residue chain is Atypical chemokine receptor 2 (378 aa).

Residues 1-49 (MPTVASPLPLTTVGSENSSSIYDYDYLDDMTILVCRKDEVLSFGRVFLP) lie on the Extracellular side of the membrane. N-linked (GlcNAc...) asparagine glycosylation is present at N17. A helical membrane pass occupies residues 50–70 (VVYSLIFVLGLAGNLLLLVVL). The Cytoplasmic portion of the chain corresponds to 71–91 (LHSAPRRRTMELYLLNLAVSN). A helical membrane pass occupies residues 92–112 (LLFVVTMPFWAISVAWHWVFG). Residues 113–117 (SFLCK) are Extracellular-facing. C116 and C194 form a disulfide bridge. A helical transmembrane segment spans residues 118–139 (VISTLYSINFYCGIFFITCMSL). The Cytoplasmic segment spans residues 140–161 (DKYLEIVHAQPLHRPKAQFRNL). The chain crosses the membrane as a helical span at residues 162 to 182 (LLIVMVWITSLAISVPEMVFV). The Extracellular segment spans residues 183–216 (QIHQTLDGVWHCYADFGGHATIWKLYLRFQLNLL). A helical membrane pass occupies residues 217–237 (GFLLPLLAMIFFYSRIGCVLV). Topologically, residues 238–249 (RLRPPGQGRALR) are cytoplasmic. The helical transmembrane segment at 250–270 (MAAALVIVFFMLWFPYNLTLF) threads the bilayer. Residues 271–292 (LHSLLDLHVFGNCEISHRLDYT) lie on the Extracellular side of the membrane. Residues 293-313 (LQVTESLAFSHCCFTPVLYAF) traverse the membrane as a helical segment. Residues 314–378 (CSHRFRRYLK…SLNKGEMGNT (65 aa)) lie on the Cytoplasmic side of the membrane. The interval 326–378 (LSVMLRWHQAPGTPSSNHSESSRVTAQEDVVSMNDLGERQSEDSLNKGEMGNT) is C-terminal cytoplasmic tail.

Belongs to the G-protein coupled receptor 1 family. Atypical chemokine receptor subfamily. Phosphorylated on serine residues in the C-terminal cytoplasmic tail. In terms of tissue distribution, expressed on apoptotic neutrophils (at protein level).

Its subcellular location is the early endosome. The protein resides in the recycling endosome. It is found in the cell membrane. In terms of biological role, atypical chemokine receptor that controls chemokine levels and localization via high-affinity chemokine binding that is uncoupled from classic ligand-driven signal transduction cascades, resulting instead in chemokine sequestration, degradation, or transcytosis. Also known as interceptor (internalizing receptor) or chemokine-scavenging receptor or chemokine decoy receptor. Acts as a receptor for chemokines including CCL2, CCL3, CCL3L1, CCL4, CCL5, CCL7, CCL8, CCL11, CCL13, CCL17, CCL22, CCL23, CCL24, SCYA2/MCP-1, SCY3/MIP-1-alpha, SCYA5/RANTES and SCYA7/MCP-3. Upon active ligand stimulation, activates a beta-arrestin 1 (ARRB1)-dependent, G protein-independent signaling pathway that results in the phosphorylation of the actin-binding protein cofilin (CFL1) through a RAC1-PAK1-LIMK1 signaling pathway. Activation of this pathway results in up-regulation of ACKR2 from endosomal compartment to cell membrane, increasing its efficiency in chemokine uptake and degradation. By scavenging chemokines in tissues, on the surfaces of lymphatic vessels, and in placenta, plays an essential role in the resolution (termination) of the inflammatory response and in the regulation of adaptive immune responses. Plays a major role in the immune silencing of macrophages during the resolution of inflammation. Acts as a regulator of inflammatory leukocyte interactions with lymphatic endothelial cells (LECs) and is required for immature/mature dendritic cells discrimination by LECs. This Mus musculus (Mouse) protein is Atypical chemokine receptor 2 (Ackr2).